Reading from the N-terminus, the 446-residue chain is Tubulin beta-6 chain (446 aa).

GTP contacts are provided by glutamine 11, glutamate 69, serine 138, glycine 142, threonine 143, glycine 144, asparagine 204, and asparagine 226. Glutamate 69 serves as a coordination point for Mg(2+). The interval glutamine 426 to methionine 446 is disordered. Over residues threonine 429–methionine 446 the composition is skewed to acidic residues.

It belongs to the tubulin family. Dimer of alpha and beta chains. A typical microtubule is a hollow water-filled tube with an outer diameter of 25 nm and an inner diameter of 15 nM. Alpha-beta heterodimers associate head-to-tail to form protofilaments running lengthwise along the microtubule wall with the beta-tubulin subunit facing the microtubule plus end conferring a structural polarity. Microtubules usually have 13 protofilaments but different protofilament numbers can be found in some organisms and specialized cells. Mg(2+) is required as a cofactor.

It is found in the cytoplasm. Its subcellular location is the cytoskeleton. Tubulin is the major constituent of microtubules, a cylinder consisting of laterally associated linear protofilaments composed of alpha- and beta-tubulin heterodimers. Microtubules grow by the addition of GTP-tubulin dimers to the microtubule end, where a stabilizing cap forms. Below the cap, tubulin dimers are in GDP-bound state, owing to GTPase activity of alpha-tubulin. The chain is Tubulin beta-6 chain (TUBB6) from Zea mays (Maize).